A 454-amino-acid polypeptide reads, in one-letter code: MSVIFHENPGTSLGSVVSSDTNPSFNHTLSIETSPEWIDDLFSNVSFIDSTTHQVIRGFCRDVFVYRLPGGFRIRYWDAAILIPNLLFLLFLFLKCTSVIRKLQTGNSPVLRAFTLLVYVSTLVNIIRCVYSMTLSMTDGIEQTVDQTLWIIIKFFYLTAEFCALTFGLLFGHLDNGRSILIALLGTLLVSIPHTAVQVIVEMKIIDNSWLPLTYFDIESDGGFVFWVLSSATLALVYFFIMCLPLVCCQKYTKLPSNGSFFIYCMMMVTLNILQSMGAALILFKSSDGLCFVGVSTYVYFVLYPPIIYFTFLRRKLKTPPNNTSGLFMYRKHKDEQGSGDLPDSYYPRFSGLTSPSYDDLFDYDRDARFTHYDISTNEYVQHPHYNTYSTPLIMSTVETAESTVTTRTGSDDFAHHRDSMLSEPSTGTTTRHLKGLGPQGSLVFEEDPSSLRL.

N-linked (GlcNAc...) asparagine glycans are attached at residues Asn-26 and Asn-44. 5 consecutive transmembrane segments (helical) span residues 80–100, 113–133, 151–171, 180–200, and 224–244; these read AILI…TSVI, AFTL…VYSM, IIIK…GLLF, ILIA…VQVI, and FVFW…IMCL. N-linked (GlcNAc...) asparagine glycosylation occurs at Asn-258. A run of 2 helical transmembrane segments spans residues 262–282 and 290–310; these read FIYC…AALI and LCFV…IIYF. N-linked (GlcNAc...) asparagine glycans are attached at residues Asn-322 and Asn-323. The disordered stretch occupies residues 408-454; the sequence is RTGSDDFAHHRDSMLSEPSTGTTTRHLKGLGPQGSLVFEEDPSSLRL. Residues 410 to 421 are compositionally biased toward basic and acidic residues; it reads GSDDFAHHRDSM. The segment covering 445–454 has biased composition (acidic residues); sequence FEEDPSSLRL.

Belongs to the UPF0359 family.

The protein localises to the membrane. This chain is Transmembrane protein adipocyte-associated 1 homolog (tpra-1), found in Caenorhabditis briggsae.